The chain runs to 192 residues: Small ribosomal subunit protein bS16 (192 aa).

The tract at residues 153–192 (AEAKAKAEAEAAAAAEEAAETEETPVEAAAEEAPAAESAE) is disordered. Positions 178-192 (VEAAAEEAPAAESAE) are enriched in low complexity.

The protein belongs to the bacterial ribosomal protein bS16 family.

In Porphyromonas gingivalis (strain ATCC BAA-308 / W83), this protein is Small ribosomal subunit protein bS16.